The chain runs to 195 residues: Transmembrane protein 126A (195 aa).

Residues 1-33 (MENHKSNNKENITIVDISRKINQLPEAERNLLE) lie on the Mitochondrial matrix side of the membrane. The chain crosses the membrane as a helical span at residues 34 to 54 (NGSVYVGLNAALCGLIANSLF). Residues 55-56 (RR) are Mitochondrial intermembrane-facing. Residues 57-77 (ILNVTKARIAAGLPMAGIPFL) form a helical membrane-spanning segment. The Mitochondrial matrix portion of the chain corresponds to 78-110 (TTDLTYRCFVSFPLNTGDLDCETCTITRSGLTG). A helical membrane pass occupies residues 111-131 (LVIGGLYPVFLAIPVNGGLAA). Over 132 to 158 (RYQSALLPHKGNILSYWIRTSKPVFRK) the chain is Mitochondrial intermembrane. A helical membrane pass occupies residues 159–175 (MLFPILLQTMFSAYLGS). The Mitochondrial matrix segment spans residues 176–195 (EQYKLLIKALQLSEPGKEIH).

The protein belongs to the TMEM126 family. As to quaternary structure, interacts with OXA1L; promoting cotranslational quality control in mitochondria. Strongly expressed in brain, cerebellum, skeletal muscle, testis. High expression also found in fetal brain, fetal retinal pigmentary epithelium, and fetal retina. Highly expressed in retinal ganglion cells.

The protein localises to the mitochondrion inner membrane. In terms of biological role, protein required for the cotranslational protein quality control in the inner membrane of the mitochondria. Associates with newly synthesized polypeptides and may act as a chaperone that cooperates with OXA1L for the insertion of newly synthesized mitochondrial proteins into the inner membrane. Required for the assembly of the ND4 module of mitochondrial complex I. The sequence is that of Transmembrane protein 126A from Homo sapiens (Human).